The following is an 844-amino-acid chain: Lysine-specific histone demethylase 1 homolog 1 (844 aa).

Residues 1 to 18 are compositionally biased toward basic and acidic residues; sequence MSTETKETRPETKPEDLG. The disordered stretch occupies residues 1–131; the sequence is MSTETKETRP…PGPRARKRRR (131 aa). Over residues 26 to 40 the composition is skewed to acidic residues; sequence PGEEPLGELIADDVN. Composition is skewed to polar residues over residues 46 to 62 and 107 to 118; these read ASAT…QSEQ and DLVTEQQSQNPN. The SWIRM domain maps to 154 to 255; that stretch reads GKEVDSEALI…FGLAPVIKEA (102 aa). FAD contacts are provided by Glu-295, Arg-297, and Arg-303. The short motif at 516-523 is the Nuclear localization signal element; the sequence is LKKGSIEF. Position 679 (Glu-679) interacts with FAD.

The protein belongs to the flavin monoamine oxidase family. Interacts with CZS. Interacts with OTU6/OTLD1. FAD serves as cofactor. Expressed in the shoot and root apical regions of young seedlings. Expressed in cotyledons and inflorescences.

The protein resides in the nucleus. It is found in the cytoplasm. In terms of biological role, probable histone demethylase that reduces the levels of histone H3 'Lys-4' methylation in chromatin of the floral repressor FLOWERING LOCUS C (FLC) and the sporophytically silenced floral repressor FWA. Seems to act in partial redundancy with FLOWERING LOCUS D (FLD) to repress FLC expression. Required for cytosine methylation of FWA. Controls primary seed dormancy by regulating DOG1 and abscisic acid signaling-related genes. In association with OTU6/OTLD1, involved in transcriptional gene repression via histone deubiquitination and demethylation. This Arabidopsis thaliana (Mouse-ear cress) protein is Lysine-specific histone demethylase 1 homolog 1.